A 124-amino-acid polypeptide reads, in one-letter code: Insulin-like growth factor 1 (124 aa).

Residues 1–19 constitute a propeptide that is removed on maturation; sequence IHFFYLGLCLLTLTSSAAA. The b stretch occupies residues 20–48; it reads GPETLCGAELVDALQFVCGDRGFYFSKPT. Intrachain disulfides connect C25-C67, C37-C80, and C66-C71. The interval 49 to 60 is c; that stretch reads GYGSSSRRLHHK. Residues 61-81 form an a region; sequence GIVDECCFQSCDLRRLEMYCA. The d stretch occupies residues 82–89; that stretch reads PIKPPKSA. The disordered stretch occupies residues 86–124; the sequence is PKSARSVRAQRHTDMPKAQKEVHLKNTSRGNTGNRNYRM. A propeptide spans 90–124 (e peptide); that stretch reads RSVRAQRHTDMPKAQKEVHLKNTSRGNTGNRNYRM. Residues 96-109 show a composition bias toward basic and acidic residues; it reads RHTDMPKAQKEVHL. Polar residues predominate over residues 110 to 124; that stretch reads KNTSRGNTGNRNYRM.

This sequence belongs to the insulin family.

It is found in the secreted. Functionally, the insulin-like growth factors, isolated from plasma, are structurally and functionally related to insulin but have a much higher growth-promoting activity. Acts as a ligand for IGF1R. Binds to the alpha subunit of IGF1R, leading to the activation of the intrinsic tyrosine kinase activity which autophosphorylates tyrosine residues in the beta subunit thus initiatiating a cascade of down-stream signaling events leading to activation of the PI3K-AKT/PKB and the Ras-MAPK pathways. Binds to integrins. Its binding to integrins and subsequent ternary complex formation with integrins and IGFR1 are essential for IGF1 signaling. This chain is Insulin-like growth factor 1, found in Coturnix japonica (Japanese quail).